The following is a 284-amino-acid chain: Homoserine O-acetyltransferase 2 (284 aa).

The active-site Acyl-thioester intermediate is Cys133. The substrate site is built by Lys154 and Ser178. His220 (proton acceptor) is an active-site residue. Residue Glu222 is part of the active site. Arg234 lines the substrate pocket.

The protein belongs to the MetA family.

The protein resides in the cytoplasm. It catalyses the reaction L-homoserine + acetyl-CoA = O-acetyl-L-homoserine + CoA. Its pathway is amino-acid biosynthesis; L-methionine biosynthesis via de novo pathway; O-acetyl-L-homoserine from L-homoserine: step 1/1. Functionally, transfers an acetyl group from acetyl-CoA to L-homoserine, forming acetyl-L-homoserine. The polypeptide is Homoserine O-acetyltransferase 2 (Ilyobacter polytropus (strain ATCC 51220 / DSM 2926 / LMG 16218 / CuHBu1)).